A 260-amino-acid polypeptide reads, in one-letter code: Snake venom serine protease homolog 2A (260 aa).

Positions 1–18 (MVLIRVLANLLILQLSYA) are cleaved as a signal peptide. A propeptide spanning residues 19 to 24 (QKSSEL) is cleaved from the precursor. The Peptidase S1 domain maps to 25-251 (IIGGDECNIN…HLDWIKSIIA (227 aa)). 6 disulfide bridges follow: Cys-31/Cys-165, Cys-52/Cys-68, Cys-100/Cys-258, Cys-144/Cys-212, Cys-176/Cys-191, and Cys-202/Cys-227. 3 N-linked (GlcNAc...) asparagine glycosylation sites follow: Asn-83, Asn-123, and Asn-124.

The protein belongs to the peptidase S1 family. Snake venom subfamily. Expressed by the venom gland.

The protein localises to the secreted. Functionally, snake venom serine protease homolog that may act in the hemostasis system of the prey. The polypeptide is Snake venom serine protease homolog 2A (TLG2A) (Craspedocephalus gramineus (Bamboo pit viper)).